A 138-amino-acid chain; its full sequence is Ribulose bisphosphate carboxylase small subunit (138 aa).

It belongs to the RuBisCO small chain family. As to quaternary structure, heterohexadecamer of 8 large and 8 small subunits.

It localises to the plastid. The protein resides in the chloroplast. In terms of biological role, ruBisCO catalyzes two reactions: the carboxylation of D-ribulose 1,5-bisphosphate, the primary event in carbon dioxide fixation, as well as the oxidative fragmentation of the pentose substrate in the photorespiration process. Both reactions occur simultaneously and in competition at the same active site. Although the small subunit is not catalytic it is essential for maximal activity. The polypeptide is Ribulose bisphosphate carboxylase small subunit (Pyropia suborbiculata (Red alga)).